The primary structure comprises 554 residues: Peroxisomal membrane protein PEX29 (554 aa).

The Cytoplasmic segment spans residues 1 to 145; sequence MDSVTNFFWN…PFMIMDELIK (145 aa). Composition is skewed to polar residues over residues 11–22 and 43–53; these read DTYNAGTPTRST and ISSGSRTSDPT. The interval 11–73 is disordered; the sequence is DTYNAGTPTR…PTSGGGFPST (63 aa). Residues 55 to 64 show a composition bias toward low complexity; the sequence is GSLPSSSGQP. Residues 146–166 form a helical membrane-spanning segment; sequence ILNWTNPAYTVSIMFLYTLII. Residues 167-172 lie on the Peroxisomal side of the membrane; that stretch reads LKPFQM. A helical transmembrane segment spans residues 173 to 193; it reads LSSLPIFYLLFCVMVPQYLYI. Residues 194-264 lie on the Cytoplasmic side of the membrane; that stretch reads HKPNPTSYLD…LQKFAFFTNE (71 aa). The chain crosses the membrane as a helical span at residues 265–285; that stretch reads AISSFYFIVLLIIATLNFLYM. Residues 286–287 are Peroxisomal-facing; the sequence is DK. A helical transmembrane segment spans residues 288 to 308; the sequence is FIKLIPMRPVLILLGWGFFIA. Residues 309–554 lie on the Cytoplasmic side of the membrane; that stretch reads SHPSNREYLL…ELTDTLNSTI (246 aa). The tract at residues 500–532 is disordered; it reads GVTKGSMSGGLTHSSDDDRADEESINGTIPNLN.

Belongs to the PEX28-32 family. PEX29 subfamily.

It localises to the peroxisome membrane. Its function is as follows. Involved in the regulation of peroxisome number, size and distribution. In Saccharomyces cerevisiae (strain ATCC 204508 / S288c) (Baker's yeast), this protein is Peroxisomal membrane protein PEX29 (PEX29).